The sequence spans 377 residues: MNLLKPAVKPPSWLLAELTYRCPVQCPYWSNPLDFAKQEKELTTAQWIKVFEEAREMGAVQIGFSGGEPLVRKDLPELIRGARDLGFYTNLITSGIGLTEKKIDAFAQAGLDHIQISFQASDEELNAALAGNAKAFQQKLAMAKAVKAHGYPMVLNFVLHRHNIDQIDKIIDLSIELDADDVELATCQFYGWAQLNREGLLPTREQIARAEDVVHQYREKMAGTGNLANLLFVTPDYYEERPKGCMGGWGAIFLSVTPEGMALPCHSARQLPVEFPSVLENTLQEIWYDSFGFNKYRGFDWMPEPCRSCSEKEKDFGGCRCQAFMLTGNADNADPVCSKSEHHGMILAAREQANCTNIQINQLQFRNRANSQLIFKG.

The 217-residue stretch at 8 to 224 (VKPPSWLLAE…HQYREKMAGT (217 aa)) folds into the Radical SAM core domain. Cys22 and Cys26 together coordinate [4Fe-4S] cluster.

The protein belongs to the radical SAM superfamily. PqqE family. As to quaternary structure, interacts with PqqD. The interaction is necessary for activity of PqqE. [4Fe-4S] cluster is required as a cofactor.

It carries out the reaction [PQQ precursor protein] + S-adenosyl-L-methionine = E-Y cross-linked-[PQQ precursor protein] + 5'-deoxyadenosine + L-methionine + H(+). It functions in the pathway cofactor biosynthesis; pyrroloquinoline quinone biosynthesis. Functionally, catalyzes the cross-linking of a glutamate residue and a tyrosine residue in the PqqA protein as part of the biosynthesis of pyrroloquinoline quinone (PQQ). The chain is PqqA peptide cyclase (pqqE) from Rahnella aquatilis.